Here is a 189-residue protein sequence, read N- to C-terminus: MRLWTGLGNPEPGMSRHRHNIGFMAVDEIARRHGFSPWRKRFRGETSEGVIGGQKILLLKPMTYMNRSGDSVQQAAQFFKIAQDDITVFHDELDLAFGKLRIKRGGGAAGHNGLRSMDKCLPGPDYWRVRMGIGHPGHKDRVTGHVLGNFAKAEEPELERWLEAIADAAPLLAKKEHEAFMTKVALLAA.

The active-site Proton acceptor is H19. TRNA contacts are provided by Y64, N66, and N112.

Belongs to the PTH family. As to quaternary structure, monomer.

Its subcellular location is the cytoplasm. It carries out the reaction an N-acyl-L-alpha-aminoacyl-tRNA + H2O = an N-acyl-L-amino acid + a tRNA + H(+). In terms of biological role, hydrolyzes ribosome-free peptidyl-tRNAs (with 1 or more amino acids incorporated), which drop off the ribosome during protein synthesis, or as a result of ribosome stalling. Its function is as follows. Catalyzes the release of premature peptidyl moieties from peptidyl-tRNA molecules trapped in stalled 50S ribosomal subunits, and thus maintains levels of free tRNAs and 50S ribosomes. This Gluconobacter oxydans (strain 621H) (Gluconobacter suboxydans) protein is Peptidyl-tRNA hydrolase.